We begin with the raw amino-acid sequence, 154 residues long: Yop proteins translocation protein O (154 aa).

Positions 132–154 (ELNQQHYQEEQEQEEFLQHHRNA) are disordered.

It belongs to the SpaM family.

Its function is as follows. Component of the yop secretion machinery. This chain is Yop proteins translocation protein O (yscO), found in Yersinia pseudotuberculosis serotype I (strain IP32953).